Reading from the N-terminus, the 141-residue chain is Protein E6 (141 aa).

Zinc fingers lie at residues 27–64 (CRFCNSFLTYIELREFDYKNLQLIWTQEDFVFACCSSC) and 101–137 (CQYCLKCLDLIEKLDICCSHQAFHKVRGNWKGRCRHC).

Belongs to the papillomaviridae E6 protein family. As to quaternary structure, forms homodimers. Interacts with ubiquitin-protein ligase UBE3A/E6-AP; this interaction stimulates UBE3A ubiquitin activity. Interacts with host BAK1.

It localises to the host cytoplasm. Its subcellular location is the host nucleus. Plays a major role in the induction and maintenance of cellular transformation. E6 associates with host UBE3A/E6-AP ubiquitin-protein ligase and modulates its activity. Protects host keratinocytes from apoptosis by mediating the degradation of host BAK1. May also inhibit host immune response. The protein is Protein E6 of Homo sapiens (Human).